A 228-amino-acid chain; its full sequence is MFDFGLGELVFVGIIALIVLGPERLPEAARTAGRLIGRLQRFVGSVKQEFDTQIELEELRKAKQEFEAAAAQVRDSLKETGTDMEGNLHDISDGLKPWEKLPEQRTPADFGVDENGNPFPDAANTLLDGISDVMPSERSYASAETLGDSGQTGSTAEPAETDQDRAWREYLTASAAAPVVQTVEVSYIDTAVETPVPHTTSLRKQAISRKRDLRPKSRAKPKLRVRKS.

Residues Met-1 to Gly-21 form a helical membrane-spanning segment. Disordered regions lie at residues Arg-138 to Asp-162 and Pro-195 to Ser-228. Positions Ala-206–Ser-228 are enriched in basic residues.

This sequence belongs to the TatB family. As to quaternary structure, the Tat system comprises two distinct complexes: a TatABC complex, containing multiple copies of TatA, TatB and TatC subunits, and a separate TatA complex, containing only TatA subunits. Substrates initially bind to the TatABC complex, which probably triggers association of the separate TatA complex to form the active translocon.

It is found in the cell inner membrane. Part of the twin-arginine translocation (Tat) system that transports large folded proteins containing a characteristic twin-arginine motif in their signal peptide across membranes. Together with TatC, TatB is part of a receptor directly interacting with Tat signal peptides. TatB may form an oligomeric binding site that transiently accommodates folded Tat precursor proteins before their translocation. The chain is Sec-independent protein translocase protein TatB from Neisseria meningitidis serogroup A / serotype 4A (strain DSM 15465 / Z2491).